Here is a 314-residue protein sequence, read N- to C-terminus: MPRTDNDSWAITESVGATALGVAAARAAETESDNPLINDPFARIFVDAAGDGIWSMYTNRTLLAGATDLDPDLRAPIQQMIDFMAARTAFFDEYFLATADAGVRQVVILASGLDSRAWRLPWPDGTVVYELDQPKVLEFKSATLRQHGAQPASQLVNVPIDLRQDWPKALQKAGFDPSKPCAWLAEGLVRYLPARAQDLLFERIDALSRPGSWLASNVPGAGFLDPERMRRQRADMRRMRAAAAKLVETEISDVDDLWYAEQRTAVAEWLRERGWDVSTATLPELLARYGRSIPHSGEDSIPPNLFVSAQRATS.

Residues Asp-132 and 161–162 (DL) contribute to the S-adenosyl-L-methionine site.

It belongs to the UPF0677 family.

Its function is as follows. Exhibits S-adenosyl-L-methionine-dependent methyltransferase activity. In Mycobacterium tuberculosis (strain ATCC 25177 / H37Ra), this protein is Putative S-adenosyl-L-methionine-dependent methyltransferase MRA_3805.